The sequence spans 1155 residues: uncharacterized protein (1155 aa).

Positions 1 to 19 (MKKNIFITSLLILLLLLSS) are cleaved as a signal peptide. C20 carries N-palmitoyl cysteine lipidation. The S-diacylglycerol cysteine moiety is linked to residue C20. 4 helical membrane passes run 289-309 (ISVS…FLIG), 395-415 (LGFI…FLIF), 424-444 (ALIT…FMLF), and 459-479 (ISYA…SMII).

The protein belongs to the TrbL/VirB6 family.

Its subcellular location is the cell membrane. This is an uncharacterized protein from Rickettsia prowazekii (strain Madrid E).